We begin with the raw amino-acid sequence, 72 residues long: uncharacterized protein (72 aa).

This is an uncharacterized protein from Escherichia coli O157:H7.